A 406-amino-acid chain; its full sequence is Vitamin D3 dihydroxylase (406 aa).

The segment covering 1–15 (MTDTATTPQTTDAPA) has biased composition (low complexity). Residues 1-24 (MTDTATTPQTTDAPAFPSNRSCPY) are disordered. Residue Thr81 participates in calciol binding. Heme contacts are provided by His103 and Arg107. Arg193, Ser236, and Ile293 together coordinate calciol. Heme is bound by residues Arg297, His353, and Cys355.

Belongs to the cytochrome P450 family. Heme serves as cofactor.

It is found in the cytoplasm. The enzyme catalyses calciol + 2 reduced [2Fe-2S]-[ferredoxin] + O2 + 2 H(+) = calcidiol + 2 oxidized [2Fe-2S]-[ferredoxin] + H2O. It catalyses the reaction calcidiol + 2 reduced [2Fe-2S]-[ferredoxin] + O2 + 2 H(+) = calcitriol + 2 oxidized [2Fe-2S]-[ferredoxin] + H2O. Involved in the metabolism of vitamin D3 (calciol) and of a number of sulfonylurea herbicides. Catalyzes the two-step hydroxylation (25- and 1-alpha-hydroxylation) of vitamin D3 (VD3) to yield its active form 1-alpha,25-dihydroxyvitamin D3 (calcitriol). The first step is the hydroxylation of the C-25 position of VD3 to produce 25-hydroxyvitamin D3 (calcidiol). The second reaction is the hydroxylation of the C1-alpha-position of calcidiol to produce calcitriol. It can also hydroxylate vitamin D2. This Streptomyces griseolus protein is Vitamin D3 dihydroxylase.